We begin with the raw amino-acid sequence, 130 residues long: Hypocretin neuropeptide precursor (130 aa).

The signal sequence occupies residues 1-32 (MNFPSTKVPWAAVTLLLLLLLPPALLSLGVDA). A Pyrrolidone carboxylic acid modification is found at glutamine 33. Cystine bridges form between cysteine 38-cysteine 44 and cysteine 39-cysteine 46. The residue at position 65 (leucine 65) is a Leucine amide. A Methionine amide modification is found at methionine 96. A propeptide spanning residues 97–130 (GRRAGAELEPHPCSGRGCPTVTTTALAPRGGSGV) is cleaved from the precursor.

The protein belongs to the orexin family. Specific enzymatic cleavages at paired basic residues yield the different active peptides. Restricted to neuronal cell bodies of the dorsal and lateral hypothalamus.

It localises to the rough endoplasmic reticulum. Its subcellular location is the cytoplasmic vesicle. It is found in the synapse. Functionally, neuropeptides that play a significant role in the regulation of food intake and sleep-wakefulness, possibly by coordinating the complex behavioral and physiologic responses of these complementary homeostatic functions. A broader role in the homeostatic regulation of energy metabolism, autonomic function, hormonal balance and the regulation of body fluids, is also suggested. In terms of biological role, binds to orexin receptors HCRTR1/OX1R and HCRTR2/OX2R with a high affinity. Stimulates food intake. Modulates pituitary luteinizing hormone secretion in an ovarian steroid-dependent manner. Binds to orexin receptor HCRTR2/OX2R only. Stimulates food intake. Modulates pituitary luteinizing hormone secretion in an ovarian steroid-dependent manner. This Mus musculus (Mouse) protein is Hypocretin neuropeptide precursor (Hcrt).